The sequence spans 401 residues: L-threonine ammonia-lyase (401 aa).

K51 is modified (N6-(pyridoxal phosphate)lysine). Pyridoxal 5'-phosphate contacts are provided by residues N78, 178–181 (GGGL), and S301. Residues 326 to 401 (FIETFVMDRP…AKGYEVRIVG (76 aa)) form the ACT domain.

Belongs to the serine/threonine dehydratase family. As to quaternary structure, homotetramer. Pyridoxal 5'-phosphate is required as a cofactor.

The enzyme catalyses L-threonine = 2-oxobutanoate + NH4(+). It catalyses the reaction L-serine = pyruvate + NH4(+). The protein operates within amino-acid biosynthesis; L-isoleucine biosynthesis; 2-oxobutanoate from L-threonine: step 1/1. Its activity is regulated as follows. Activity is insensitive to allosteric regulators L-valine and L-isoleucine at low concentrations, while these L-amino acids are inhibitors at high concentrations. Is insensitive to ammonium chloride and AMP. Inhibited in the presence of aminoxyacetic acid (AOAA), an inhibitor of pyridoxal phosphate-dependent enzymes. Functionally, catalyzes the conversion of L-threonine to 2-oxobutanoate and ammonia. Can also use L-serine, but the catalytic efficiency toward L-threonine is about sixfold higher than that toward L-serine. Also shows weak activity toward L-allo-threonine, but cannot use the corresponding D-amino acids. Does not exhibit racemase activity toward various amino acids, including serine. Physiologically, is likely involved in the threonine-dependent pathway of isoleucine biosynthesis. The polypeptide is L-threonine ammonia-lyase (Thermotoga maritima (strain ATCC 43589 / DSM 3109 / JCM 10099 / NBRC 100826 / MSB8)).